Here is a 196-residue protein sequence, read N- to C-terminus: MKNIAVIFPNQLFEISYLPYDPDSIDVYIIVEDSLYFSDNERFLRFNLLKLIYLRAAMKYYYDYLTDRGYDVIYLDWTGEPSLVFEYVSKNYGSCNLNIIDPVDYLLEERIAEFSDSYNQKIIYYESPGFILTNLDLKQYTGSKQGANKKFFQHSFYAWFRKKFDILMDGNKPIGGKYSYDKYNRQTIPNKIFISF.

This is an uncharacterized protein from Acanthamoeba polyphaga mimivirus (APMV).